Here is a 528-residue protein sequence, read N- to C-terminus: Benzoylformate decarboxylase (528 aa).

The Mg(2+) site is built by Asn-117, Leu-118, and Arg-120. The tract at residues 377 to 460 (TSTTAQMWQR…VIMNNGTYGA (84 aa)) is thiamine pyrophosphate binding. Ca(2+) contacts are provided by Asp-428, Asn-455, and Thr-457.

This sequence belongs to the TPP enzyme family. In terms of assembly, homotetramer. Requires Ca(2+) as cofactor. Thiamine diphosphate is required as a cofactor. The cofactor is Mg(2+).

It carries out the reaction phenylglyoxylate + H(+) = benzaldehyde + CO2. Its pathway is aromatic compound metabolism; (R)-mandelate degradation; benzoate from (R)-mandelate: step 3/4. This is Benzoylformate decarboxylase (mdlC) from Pseudomonas putida (Arthrobacter siderocapsulatus).